Consider the following 591-residue polypeptide: Serine/threonine-protein kinase Nek2 (591 aa).

The region spanning 4 to 258 is the Protein kinase domain; sequence YEVLEQIGKG…AAQLLKHPQL (255 aa). ATP contacts are provided by residues 10–18 and Lys33; that span reads IGKGAFGSA. Residue Asp129 is the Proton acceptor of the active site. Disordered stretches follow at residues 309–331, 382–408, and 500–534; these read LGNERTVTFSKPSPERNSVSSTR, ARNQLEPPKTSYNRTYRSELPSKTTPN, and RTDGDNGSDSSGRNATAASSRGSNDSRQQRFDTSS. Composition is skewed to polar residues over residues 391–408 and 504–534; these read TSYNRTYRSELPSKTTPN and DNGSDSSGRNATAASSRGSNDSRQQRFDTSS.

This sequence belongs to the protein kinase superfamily. NEK Ser/Thr protein kinase family. NIMA subfamily. As to expression, expressed in anthers, pistils and leaves.

The enzyme catalyses L-seryl-[protein] + ATP = O-phospho-L-seryl-[protein] + ADP + H(+). It carries out the reaction L-threonyl-[protein] + ATP = O-phospho-L-threonyl-[protein] + ADP + H(+). Functionally, may be involved in plant development processes. This is Serine/threonine-protein kinase Nek2 from Oryza sativa subsp. japonica (Rice).